The primary structure comprises 183 residues: MKQPDRNQQQGAKSNRPAINDEIRAKEVRLVGADGEQKGIVSLNEALRAAEDADLDLVEIVANAEPPVCKIMDYNKHLFDLKQKQKDAKKKQHQVQVKEIKLRPATDVGDYQVKLRAILKFLEEGNKVKITLRFRGREMAHQQLGLAQLQKIEADVAELGVVEQAPKMEGRQMGMLLGPKKKK.

Polar residues predominate over residues 1-13 (MKQPDRNQQQGAK). Positions 1–21 (MKQPDRNQQQGAKSNRPAIND) are disordered.

The protein belongs to the IF-3 family. As to quaternary structure, monomer.

The protein resides in the cytoplasm. IF-3 binds to the 30S ribosomal subunit and shifts the equilibrium between 70S ribosomes and their 50S and 30S subunits in favor of the free subunits, thus enhancing the availability of 30S subunits on which protein synthesis initiation begins. This Acinetobacter baumannii (strain AYE) protein is Translation initiation factor IF-3.